Consider the following 1405-residue polypeptide: DNA-directed RNA polymerase subunit beta' (1405 aa).

The Zn(2+) site is built by Cys70, Cys72, Cys85, and Cys88. Asp460, Asp462, and Asp464 together coordinate Mg(2+). Zn(2+) is bound by residues Cys815, Cys890, Cys897, and Cys900.

It belongs to the RNA polymerase beta' chain family. In terms of assembly, the RNAP catalytic core consists of 2 alpha, 1 beta, 1 beta' and 1 omega subunit. When a sigma factor is associated with the core the holoenzyme is formed, which can initiate transcription. It depends on Mg(2+) as a cofactor. Zn(2+) is required as a cofactor.

The enzyme catalyses RNA(n) + a ribonucleoside 5'-triphosphate = RNA(n+1) + diphosphate. Its function is as follows. DNA-dependent RNA polymerase catalyzes the transcription of DNA into RNA using the four ribonucleoside triphosphates as substrates. This Xanthomonas campestris pv. campestris (strain 8004) protein is DNA-directed RNA polymerase subunit beta'.